The sequence spans 185 residues: Ribosome-recycling factor (185 aa).

It belongs to the RRF family.

The protein localises to the cytoplasm. In terms of biological role, responsible for the release of ribosomes from messenger RNA at the termination of protein biosynthesis. May increase the efficiency of translation by recycling ribosomes from one round of translation to another. This chain is Ribosome-recycling factor, found in Pseudomonas entomophila (strain L48).